Consider the following 470-residue polypeptide: 3-oxo-isoapionate kinase (470 aa).

Substrate-binding residues include Asp30 and Arg78. Residues Ser291, 403-406 (GGDS), and Gly451 each bind ATP.

Belongs to the four-carbon acid sugar kinase family.

The catalysed reaction is 3-oxoisoapionate + ATP = 3-oxoisoapionate 4-phosphate + ADP + H(+). It functions in the pathway carbohydrate metabolism. Its function is as follows. Involved in catabolism of D-apiose. Catalyzes the phosphorylation of 3-oxo-isoapionate to 3-oxo-isoapionate 4-phosphate. The protein is 3-oxo-isoapionate kinase of Paraburkholderia graminis (strain ATCC 700544 / DSM 17151 / LMG 18924 / NCIMB 13744 / C4D1M).